The sequence spans 203 residues: ATP-dependent Clp protease proteolytic subunit 1 (203 aa).

The active-site Nucleophile is Ser101. Residue His126 is part of the active site.

This sequence belongs to the peptidase S14 family. As to quaternary structure, fourteen ClpP subunits assemble into 2 heptameric rings which stack back to back to give a disk-like structure with a central cavity, resembling the structure of eukaryotic proteasomes.

It is found in the cytoplasm. The enzyme catalyses Hydrolysis of proteins to small peptides in the presence of ATP and magnesium. alpha-casein is the usual test substrate. In the absence of ATP, only oligopeptides shorter than five residues are hydrolyzed (such as succinyl-Leu-Tyr-|-NHMec, and Leu-Tyr-Leu-|-Tyr-Trp, in which cleavage of the -Tyr-|-Leu- and -Tyr-|-Trp bonds also occurs).. Functionally, cleaves peptides in various proteins in a process that requires ATP hydrolysis. Has a chymotrypsin-like activity. Plays a major role in the degradation of misfolded proteins. The polypeptide is ATP-dependent Clp protease proteolytic subunit 1 (Synechococcus sp. (strain JA-3-3Ab) (Cyanobacteria bacterium Yellowstone A-Prime)).